Consider the following 696-residue polypeptide: Putative cyclic nucleotide-gated ion channel 13 (696 aa).

Residues 1 to 81 (MAFGRNNRVR…QGSFLQNWNK (81 aa)) are Cytoplasmic-facing. Residues 45 to 65 (KPLSFGSHNKKRDSNSSTTTQ) are disordered. The chain crosses the membrane as a helical span at residues 82-102 (IFLFASVIALAIDPLFFYIPI). The Extracellular portion of the chain corresponds to 103–116 (VDGERHCLNLHRNL). Residues 117–137 (EIAASVLRTFIDAFYIIHIVF) form a helical membrane-spanning segment. The Cytoplasmic segment spans residues 138–170 (QFRTAYISPSSRVFGRGELVDDPKAIAIKYLSS). The chain crosses the membrane as a helical span at residues 171-191 (YFIIDLLSILPLPQLVVLAVI). The Extracellular portion of the chain corresponds to 192–204 (PNVNKPVSLITKD). The helical transmembrane segment at 205–225 (YLITVIFTQYIPRILRIYPLY) threads the bilayer. Residues 226–243 (TEVTRTSGIVTETAWAGA) are Cytoplasmic-facing. A helical transmembrane segment spans residues 244 to 264 (AWNLSLYMLASHVFGALWYLI). At 265-367 (SVEREDRCWR…GQNLNTSKFV (103 aa)) the chain is on the extracellular side. Residues 368–388 (GEIIFAVSICISGLVLFALLI) form a helical membrane-spanning segment. Residues 389 to 696 (GNMQKYLEST…SEPDFSLRNP (308 aa)) are Cytoplasmic-facing. A nucleoside 3',5'-cyclic phosphate-binding positions include 474-598 (LFEI…SKQL) and glutamate 545. The segment at 590-605 (FRRLHSKQLQHTFRFY) is calmodulin-binding. Residues 610-639 (RTWGASFIQAAWRRHCRRKLARSLTEEEDR) enclose the IQ domain. The interval 677 to 696 (NNLPLLPPKPSEPDFSLRNP) is disordered.

This sequence belongs to the cyclic nucleotide-gated cation channel (TC 1.A.1.5) family. As to quaternary structure, homotetramer or heterotetramer.

The protein resides in the cell membrane. In terms of biological role, putative cyclic nucleotide-gated ion channel. The protein is Putative cyclic nucleotide-gated ion channel 13 (CNGC13) of Arabidopsis thaliana (Mouse-ear cress).